The chain runs to 210 residues: Hypoxanthine-guanine phosphoribosyltransferase (210 aa).

Residues Lys-54, 113–121, Lys-145, and Asp-173 each bind GMP; that span reads EDILDTALT. Catalysis depends on Asp-117, which acts as the Proton acceptor. Asp-173 contributes to the Mg(2+) binding site.

The protein belongs to the purine/pyrimidine phosphoribosyltransferase family. Mg(2+) serves as cofactor.

The protein localises to the cytoplasm. It catalyses the reaction IMP + diphosphate = hypoxanthine + 5-phospho-alpha-D-ribose 1-diphosphate. It carries out the reaction GMP + diphosphate = guanine + 5-phospho-alpha-D-ribose 1-diphosphate. It functions in the pathway purine metabolism; IMP biosynthesis via salvage pathway; IMP from hypoxanthine: step 1/1. Converts guanine to guanosine monophosphate, and hypoxanthine to inosine monophosphate. Transfers the 5-phosphoribosyl group from 5-phosphoribosylpyrophosphate onto the purine. Plays a central role in the generation of purine nucleotides through the purine salvage pathway. This Trypanosoma brucei brucei protein is Hypoxanthine-guanine phosphoribosyltransferase (HGPRT).